The primary structure comprises 892 residues: Alanine--tRNA ligase (892 aa).

Zn(2+)-binding residues include H565, H569, C675, and H679. The segment at 852–871 (MGGKGGGGRPDMAQAGGPEA) is disordered.

Belongs to the class-II aminoacyl-tRNA synthetase family. Zn(2+) is required as a cofactor.

Its subcellular location is the cytoplasm. It carries out the reaction tRNA(Ala) + L-alanine + ATP = L-alanyl-tRNA(Ala) + AMP + diphosphate. Catalyzes the attachment of alanine to tRNA(Ala) in a two-step reaction: alanine is first activated by ATP to form Ala-AMP and then transferred to the acceptor end of tRNA(Ala). Also edits incorrectly charged Ser-tRNA(Ala) and Gly-tRNA(Ala) via its editing domain. The polypeptide is Alanine--tRNA ligase (Parvibaculum lavamentivorans (strain DS-1 / DSM 13023 / NCIMB 13966)).